A 430-amino-acid polypeptide reads, in one-letter code: Flavin-dependent monooxygenase eupH (430 aa).

Residues 11-14 (AGIG), 33-34 (ER), Gln43, Arg107, Tyr282, and Asp306 contribute to the FAD site.

This sequence belongs to the aromatic-ring hydroxylase family. The cofactor is FAD.

Its pathway is secondary metabolite biosynthesis; terpenoid biosynthesis. Its function is as follows. Flavin-dependent monooxygenase; part of the gene cluster that mediates the biosynthesis of eupenifeldin, a bistropolone meroterpenoid that acts as an antitumor agent. The first step of eupenifeldin biosynthesis is the biosynthesis of 3-methylorcinaldehyde performed by the non-reducing polyketide synthase eupA. Oxidative dearomatization of 3-methylorcinaldehyde likely catalyzed by the FAD-dependent monooxygenase eupB is followed by oxidative ring expansion by the 2-oxoglutarate-dependent dioxygenase eupC to provide the first tropolone metabolite, tropolone stipitaldehyde. In parallel, generation of sesquiterpene alpha-humulene from farnesylpyrophosphate (FPP) is catalyzed by the terpene cyclase eupE. The cytochrome P450 monooxygenase eupD then hydroxylates humulene to humulenol. The putative Diels-Alderase eupF probably catalyzes the formation of the tropolone-humulene skeleton by linking humulenol and the polyketide moiety. The short-chain dehydrogenase/reductase eupG and the flavin-dependent monooxygenase eupH are also essential for eupenifeldin biosynthesis and are likely the additional decorating enzymes of the tropolone-humulene skeleton to produce final eupenifeldin or derivatives. This Phoma sp protein is Flavin-dependent monooxygenase eupH.